We begin with the raw amino-acid sequence, 149 residues long: Protein OPG200 (149 aa).

The protein belongs to the orthopoxvirus OPG200 family. As to quaternary structure, homodimers. Interacts with host IKBKB; this interaction inhibits host NF-kappa-B activation.

Functionally, contributes to virulence by binding to the host IKBKB subunit of the IKK complex and preventing host NF-kappa-B activation in response to pro-inflammatory stimuli such as TNF-alpha or IL1B. Mechanistically, sterically hinders the direct contact between the kinase domains of IKBKB in the IKK complex containing IKBKB, CHUK/IKKA and NEMO. The polypeptide is Protein OPG200 (OPG200) (Vaccinia virus (strain Western Reserve) (VACV)).